A 906-amino-acid chain; its full sequence is Protein transport protein SEC24-2 (906 aa).

Zn(2+) is bound by residues Cys222, Cys225, Cys244, and Cys247. The segment at 222 to 247 (CRRCRSYMNPFVTFIEQGRRWRCNFC) is zinc finger-like.

It belongs to the SEC23/SEC24 family. SEC24 subfamily. The COPII coat is composed of at least 5 proteins: the SEC23/24 complex, the SEC13/31 complex, and the protein SAR1. Golgi apparatus membrane; Peripheral membrane protein; Cytoplasmic side.

It localises to the cytoplasm. The protein resides in the cytoplasmic vesicle. Its subcellular location is the COPII-coated vesicle membrane. It is found in the endoplasmic reticulum membrane. The protein localises to the golgi apparatus membrane. Its function is as follows. Component of the coat protein complex II (COPII) which promotes the formation of transport vesicles from the endoplasmic reticulum (ER). The coat has two main functions, the physical deformation of the endoplasmic reticulum membrane into vesicles and the selection of cargo molecules. The sequence is that of Protein transport protein SEC24-2 (SEC242) from Candida glabrata (strain ATCC 2001 / BCRC 20586 / JCM 3761 / NBRC 0622 / NRRL Y-65 / CBS 138) (Yeast).